Consider the following 189-residue polypeptide: Putative transcription factor ovo-like protein 3 (189 aa).

A disordered region spans residues 1-20 (MPRVFLVRSRRPQPPNWSHL). 4 C2H2-type zinc fingers span residues 69–91 (LGCP…LKCH), 97–119 (HVCH…MRTH), 125–148 (FRCG…AKVH), and 164–186 (HVCE…RTLH).

The protein belongs to the krueppel C2H2-type zinc-finger protein family.

Its subcellular location is the nucleus. Functionally, may act as a transcription regulator. The polypeptide is Putative transcription factor ovo-like protein 3 (Ovol3) (Mus musculus (Mouse)).